A 200-amino-acid chain; its full sequence is Serine/threonine-protein kinase mos (200 aa).

Positions 2–200 constitute a Protein kinase domain; it reads LCLLQPLGSG…ELLKGERVTA (199 aa). Residues 8–16 and Lys29 each bind ATP; that span reads LGSGGFGSV. Asp143 functions as the Proton acceptor in the catalytic mechanism.

Belongs to the protein kinase superfamily. Ser/Thr protein kinase family.

It carries out the reaction L-seryl-[protein] + ATP = O-phospho-L-seryl-[protein] + ADP + H(+). It catalyses the reaction L-threonyl-[protein] + ATP = O-phospho-L-threonyl-[protein] + ADP + H(+). The polypeptide is Serine/threonine-protein kinase mos (MOS) (Nycticorax nycticorax (Black-crowned night-heron)).